A 151-amino-acid chain; its full sequence is UPF0178 protein RD1_0321 (151 aa).

Belongs to the UPF0178 family.

This chain is UPF0178 protein RD1_0321, found in Roseobacter denitrificans (strain ATCC 33942 / OCh 114) (Erythrobacter sp. (strain OCh 114)).